The sequence spans 131 residues: Keratin, high-sulfur matrix protein, IIIA3 (131 aa).

As to expression, wool.

The keratin products of mammalian epidermal derivatives such as wool and hair consist of microfibrils embedded in a rigid matrix of other proteins. The matrix proteins include the high-sulfur and high-tyrosine keratins, having molecular weights of 6-20 kDa, whereas the microfibrils contain the larger, low-sulfur keratins (40-56 kDa). In Ovis aries (Sheep), this protein is Keratin, high-sulfur matrix protein, IIIA3.